A 509-amino-acid polypeptide reads, in one-letter code: Solute carrier family 2, facilitated glucose transporter member 4 (509 aa).

Residues M1–T23 are Cytoplasmic-facing. Residues Q7 to G13 form an interaction with SRFBP1 region. S10 bears the Phosphoserine mark. A helical membrane pass occupies residues L24–V44. Residues I45–L80 are Extracellular-facing. N57 carries an N-linked (GlcNAc...) asparagine glycan. The chain crosses the membrane as a helical span at residues W81–I101. Residues I102 to R110 are Cytoplasmic-facing. Residues A111–A131 traverse the membrane as a helical segment. Topologically, residues A132 to G141 are extracellular. The helical transmembrane segment at R142 to E162 threads the bilayer. Over I163–G170 the chain is Cytoplasmic. The chain crosses the membrane as a helical span at residues A171–G191. Q177 is a D-glucose binding site. At L192–T200 the chain is on the extracellular side. The helical transmembrane segment at L201–P221 threads the bilayer. Residues F222–Q286 are Cytoplasmic-facing. A lipid anchor (S-palmitoyl cysteine) is attached at C223. The residue at position 274 (S274) is a Phosphoserine; by SGK1. The chain crosses the membrane as a helical span at residues P287–F307. Residues Q298–Q299 and N304 each bind D-glucose. Residues Y308–P322 lie on the Extracellular side of the membrane. A helical transmembrane segment spans residues A323–L343. N333 contributes to the D-glucose binding site. Over V344–L352 the chain is Cytoplasmic. The chain crosses the membrane as a helical span at residues H353–L373. Residues L374–S384 lie on the Extracellular side of the membrane. A helical membrane pass occupies residues I385–F405. E396 and W404 together coordinate D-glucose. The Cytoplasmic portion of the chain corresponds to I406–R416. Residues P417–G437 traverse the membrane as a helical segment. The Extracellular segment spans residues F438–A444. The chain crosses the membrane as a helical span at residues M445–F465. Topologically, residues L466–N508 are cytoplasmic. A Phosphothreonine modification is found at T486. S488 bears the Phosphoserine mark. The short motif at L489–L490 is the Dileucine internalization motif element.

This sequence belongs to the major facilitator superfamily. Sugar transporter (TC 2.A.1.1) family. Glucose transporter subfamily. Binds to DAXX. Interacts via its N-terminus with SRFBP1. Interacts with NDUFA9. Interacts with TRARG1; the interaction is required for proper SLC2A4 recycling after insulin stimulation. Sumoylated. In terms of processing, palmitoylated. Palmitoylation by ZDHHC7 controls the insulin-dependent translocation of GLUT4 to the plasma membrane. In terms of tissue distribution, expressed in skeletal and cardiac muscles. Expressed in brown and white adipose tissues.

The protein localises to the cell membrane. It is found in the endomembrane system. The protein resides in the cytoplasm. Its subcellular location is the perinuclear region. The catalysed reaction is D-glucose(out) = D-glucose(in). In terms of biological role, insulin-regulated facilitative glucose transporter, which plays a key role in removal of glucose from circulation. Response to insulin is regulated by its intracellular localization: in the absence of insulin, it is efficiently retained intracellularly within storage compartments in muscle and fat cells. Upon insulin stimulation, translocates from these compartments to the cell surface where it transports glucose from the extracellular milieu into the cell. The polypeptide is Solute carrier family 2, facilitated glucose transporter member 4 (Mus musculus (Mouse)).